The following is a 231-amino-acid chain: 7-cyano-7-deazaguanine synthase (231 aa).

8–18 (FSGGQDSTTCL) provides a ligand contact to ATP. Zn(2+) contacts are provided by C188, C197, C200, and C203.

The protein belongs to the QueC family. It depends on Zn(2+) as a cofactor.

It carries out the reaction 7-carboxy-7-deazaguanine + NH4(+) + ATP = 7-cyano-7-deazaguanine + ADP + phosphate + H2O + H(+). Its pathway is purine metabolism; 7-cyano-7-deazaguanine biosynthesis. Its function is as follows. Catalyzes the ATP-dependent conversion of 7-carboxy-7-deazaguanine (CDG) to 7-cyano-7-deazaguanine (preQ(0)). The protein is 7-cyano-7-deazaguanine synthase of Enterobacter sp. (strain 638).